Here is a 228-residue protein sequence, read N- to C-terminus: Putative N-acetylmannosamine-6-phosphate 2-epimerase (228 aa).

It belongs to the NanE family.

The enzyme catalyses an N-acyl-D-glucosamine 6-phosphate = an N-acyl-D-mannosamine 6-phosphate. The protein operates within amino-sugar metabolism; N-acetylneuraminate degradation; D-fructose 6-phosphate from N-acetylneuraminate: step 3/5. Its function is as follows. Converts N-acetylmannosamine-6-phosphate (ManNAc-6-P) to N-acetylglucosamine-6-phosphate (GlcNAc-6-P). The chain is Putative N-acetylmannosamine-6-phosphate 2-epimerase from Thermosynechococcus vestitus (strain NIES-2133 / IAM M-273 / BP-1).